Consider the following 434-residue polypeptide: UDP-N-acetylmuramoylalanine--D-glutamate ligase (434 aa).

ATP is bound at residue 117–123 (GTNGKST).

This sequence belongs to the MurCDEF family.

It localises to the cytoplasm. It catalyses the reaction UDP-N-acetyl-alpha-D-muramoyl-L-alanine + D-glutamate + ATP = UDP-N-acetyl-alpha-D-muramoyl-L-alanyl-D-glutamate + ADP + phosphate + H(+). The protein operates within cell wall biogenesis; peptidoglycan biosynthesis. Functionally, cell wall formation. Catalyzes the addition of glutamate to the nucleotide precursor UDP-N-acetylmuramoyl-L-alanine (UMA). The polypeptide is UDP-N-acetylmuramoylalanine--D-glutamate ligase (Sphingopyxis alaskensis (strain DSM 13593 / LMG 18877 / RB2256) (Sphingomonas alaskensis)).